The following is a 266-amino-acid chain: MKTFAAYVITACLSSTALASSITENTSWNKEFSAEAVNGVFVLCKSSSKSCATNNLARASKEYLPASTFKIPNAIIGLETGVIKNEHQVFKWDGKPRAMKQWERDLSLRGAIQVSAVPVFQQIAREVGEVRMQKYLKKFSYGNQNISGGIDKFWLEDQLRISAVNQVEFLESLFLNKLSASKENQLIVKEALVTEAAPEYLVHSKTGFSGVGTESNPGVAWWVGWVEKGTEVYFFAFNMDIDNENKLPLRKSIPTKIMASEGIIGG.

The signal sequence occupies residues Met1–Ser20. The active-site Acyl-ester intermediate is Ser67. At Lys70 the chain carries N6-carboxylysine. A substrate-binding site is contributed by Lys205–Gly207.

This sequence belongs to the class-D beta-lactamase family.

It carries out the reaction a beta-lactam + H2O = a substituted beta-amino acid. The chain is Beta-lactamase OXA-19 (bla) from Pseudomonas aeruginosa.